The following is a 273-amino-acid chain: Stress response protein YsnF (273 aa).

A compositionally biased stretch (basic and acidic residues) spans 241-264; it reads ENEHISETVKKEEPRLNKEGKVDG. The segment at 241-273 is disordered; the sequence is ENEHISETVKKEEPRLNKEGKVDGLDDDPLNNK.

The chain is Stress response protein YsnF (ysnF) from Bacillus subtilis (strain 168).